We begin with the raw amino-acid sequence, 343 residues long: N-acetyl-gamma-glutamyl-phosphate reductase (343 aa).

Cysteine 149 is a catalytic residue.

Belongs to the NAGSA dehydrogenase family. Type 1 subfamily.

Its subcellular location is the cytoplasm. The enzyme catalyses N-acetyl-L-glutamate 5-semialdehyde + phosphate + NADP(+) = N-acetyl-L-glutamyl 5-phosphate + NADPH + H(+). It functions in the pathway amino-acid biosynthesis; L-arginine biosynthesis; N(2)-acetyl-L-ornithine from L-glutamate: step 3/4. Its function is as follows. Catalyzes the NADPH-dependent reduction of N-acetyl-5-glutamyl phosphate to yield N-acetyl-L-glutamate 5-semialdehyde. The chain is N-acetyl-gamma-glutamyl-phosphate reductase from Methanococcus maripaludis (strain C5 / ATCC BAA-1333).